A 443-amino-acid chain; its full sequence is Thymidine phosphorylase (443 aa).

It belongs to the thymidine/pyrimidine-nucleoside phosphorylase family. As to quaternary structure, homodimer.

It catalyses the reaction thymidine + phosphate = 2-deoxy-alpha-D-ribose 1-phosphate + thymine. The protein operates within pyrimidine metabolism; dTMP biosynthesis via salvage pathway; dTMP from thymine: step 1/2. Functionally, the enzymes which catalyze the reversible phosphorolysis of pyrimidine nucleosides are involved in the degradation of these compounds and in their utilization as carbon and energy sources, or in the rescue of pyrimidine bases for nucleotide synthesis. The protein is Thymidine phosphorylase of Shewanella baltica (strain OS223).